Here is a 146-residue protein sequence, read N- to C-terminus: Large ribosomal subunit protein uL15 (146 aa).

Residues 1–53 (MILSNLKPVPGARHSKKRLGRGPGSGTGKTSGKGHKGQKARSGGGVRPGFEGG) form a disordered region. Gly residues-rich tracts occupy residues 21–31 (RGPGSGTGKTS) and 42–52 (SGGGVRPGFEG).

This sequence belongs to the universal ribosomal protein uL15 family. In terms of assembly, part of the 50S ribosomal subunit.

Functionally, binds to the 23S rRNA. This Acholeplasma laidlawii (strain PG-8A) protein is Large ribosomal subunit protein uL15.